Consider the following 313-residue polypeptide: Tyrosine recombinase XerD (313 aa).

Residues 17–102 (EDNDVIIEQF…TLRRFFQYLY (86 aa)) form the Core-binding (CB) domain. The Tyr recombinase domain occupies 123-307 (RLPKDLSEQQ…ATERLKVLHQ (185 aa)). Catalysis depends on residues arginine 163, lysine 187, histidine 259, arginine 262, and histidine 285. The active-site O-(3'-phospho-DNA)-tyrosine intermediate is the tyrosine 294.

Belongs to the 'phage' integrase family. XerD subfamily. Forms a cyclic heterotetrameric complex composed of two molecules of XerC and two molecules of XerD, in which XerC interacts with XerD via its C-terminal region, XerD interacts with XerC via its C-terminal region and so on.

The protein localises to the cytoplasm. Its activity is regulated as follows. FtsK may regulate the catalytic switch between XerC and XerD in the heterotetrameric complex during the two steps of the recombination process. In terms of biological role, site-specific tyrosine recombinase, which acts by catalyzing the cutting and rejoining of the recombining DNA molecules. Binds cooperatively to specific DNA consensus sequences that are separated from XerC binding sites by a short central region, forming the heterotetrameric XerC-XerD complex that recombines DNA substrates. The complex is essential to convert dimers of the bacterial chromosome into monomers to permit their segregation at cell division. It also contributes to the segregational stability of plasmids. In the complex XerD specifically exchanges the bottom DNA strands. The polypeptide is Tyrosine recombinase XerD (Proteus mirabilis).